Reading from the N-terminus, the 251-residue chain is Squamosa promoter-binding-like protein 4 (251 aa).

Positions 1-15 (MDWMPPPKPTSPRSP) are enriched in pro residues. Positions 1 to 64 (MDWMPPPKPT…RAEEGGGGGG (64 aa)) are disordered. Over residues 24-43 (AAVPGSSSGEVSAAAAAAAA) the composition is skewed to low complexity. The segment at 65 to 142 (EVRCQVEGCG…YDHNARRRKP (78 aa)) adopts an SBP-type zinc-finger fold. Zn(2+) contacts are provided by cysteine 68, cysteine 73, cysteine 90, histidine 93, cysteine 109, cysteine 112, histidine 116, and cysteine 128. Residues 125-141 (KRSCRRRLYDHNARRRK) carry the Bipartite nuclear localization signal motif.

In terms of tissue distribution, expressed in stems, leaf sheaths, and young panicles.

It is found in the nucleus. Functionally, trans-acting factor that binds specifically to the consensus nucleotide sequence 5'-TNCGTACAA-3'. May be involved in panicle development. In Oryza sativa subsp. japonica (Rice), this protein is Squamosa promoter-binding-like protein 4 (SPL4).